The primary structure comprises 180 residues: dCTP deaminase, dUMP-forming (180 aa).

DCTP is bound by residues 100 to 105, aspartate 117, 125 to 127, glutamine 146, tyrosine 160, and glutamine 167; these read RSSLGR and TLE. The active-site Proton donor/acceptor is glutamate 127.

The protein belongs to the dCTP deaminase family. As to quaternary structure, homotrimer.

The enzyme catalyses dCTP + 2 H2O = dUMP + NH4(+) + diphosphate. The protein operates within pyrimidine metabolism; dUMP biosynthesis; dUMP from dCTP: step 1/1. Bifunctional enzyme that catalyzes both the deamination of dCTP to dUTP and the hydrolysis of dUTP to dUMP without releasing the toxic dUTP intermediate. The polypeptide is dCTP deaminase, dUMP-forming (Sulfurihydrogenibium sp. (strain YO3AOP1)).